The following is a 404-amino-acid chain: Probable tRNA sulfurtransferase (404 aa).

The 106-residue stretch at 60–165 folds into the THUMP domain; the sequence is QPIVEALKLV…DEAAYISYEE (106 aa). ATP-binding positions include 183-184, 208-209, R265, G287, and Q296; these read ML and HF.

This sequence belongs to the ThiI family.

The protein resides in the cytoplasm. The catalysed reaction is [ThiI sulfur-carrier protein]-S-sulfanyl-L-cysteine + a uridine in tRNA + 2 reduced [2Fe-2S]-[ferredoxin] + ATP + H(+) = [ThiI sulfur-carrier protein]-L-cysteine + a 4-thiouridine in tRNA + 2 oxidized [2Fe-2S]-[ferredoxin] + AMP + diphosphate. It carries out the reaction [ThiS sulfur-carrier protein]-C-terminal Gly-Gly-AMP + S-sulfanyl-L-cysteinyl-[cysteine desulfurase] + AH2 = [ThiS sulfur-carrier protein]-C-terminal-Gly-aminoethanethioate + L-cysteinyl-[cysteine desulfurase] + A + AMP + 2 H(+). It participates in cofactor biosynthesis; thiamine diphosphate biosynthesis. Its function is as follows. Catalyzes the ATP-dependent transfer of a sulfur to tRNA to produce 4-thiouridine in position 8 of tRNAs, which functions as a near-UV photosensor. Also catalyzes the transfer of sulfur to the sulfur carrier protein ThiS, forming ThiS-thiocarboxylate. This is a step in the synthesis of thiazole, in the thiamine biosynthesis pathway. The sulfur is donated as persulfide by IscS. This chain is Probable tRNA sulfurtransferase, found in Streptococcus pyogenes serotype M12 (strain MGAS2096).